The primary structure comprises 234 residues: Glutathione S-transferase sirG (234 aa).

Residues 15 to 99 (LYVVKATPTS…YLTDAYDHEG (85 aa)) enclose the GST N-terminal domain. The GST C-terminal domain occupies 105-230 (DLWERTQVNN…KALSQKFRPS (126 aa)).

It belongs to the GST superfamily.

It catalyses the reaction RX + glutathione = an S-substituted glutathione + a halide anion + H(+). The protein operates within mycotoxin biosynthesis. Functionally, glutathione S-transferase; part of the gene cluster that mediates the biosynthesis of sirodesmin PL, an epipolythiodioxopiperazine (ETP) characterized by a disulfide bridged cyclic dipeptide and that acts as a phytotoxin which is involved in the blackleg didease of canola. SirD catalyzes the O-prenylation of L-tyrosine (L-Tyr) in the presence of dimethylallyl diphosphate (DMAPP) to yield 4-O-dimethylallyl-L-Tyr, and therefore represents probably the first pathway-specific enzyme in the biosynthesis of sirodesmin PL. 4-O-dimethylallyl-L-Tyr, then undergoes condensation with L-Ser in a reaction catalyzed by the non-ribosomal peptide synthase sirP to form the diketopiperazine (DKP) backbone. Further bishydroxylation of the DKP performed by the cytochrome P450 monooxygenase sirC leads to the production of the intermediate phomamide. This step is essential to form the reactive thiol group required for toxicity of sirodesmin PL. The next steps of sirodesmin biosynthesis are not well understood yet, but some predictions could be made from intermediate compounds identification. Phomamide is converted into phomalizarine via oxidation, probably by sirT. Further oxidation, methylation (by sirM or sirN) and reduction steps convert phomalizarine to deacetyl sirodesmin. Finally, acetyltransferase sirH probably acetylates deacetyl sirodesmin to produce sirodesmin PL. The polypeptide is Glutathione S-transferase sirG (Leptosphaeria maculans (Blackleg fungus)).